The primary structure comprises 209 residues: Thymidine kinase (209 aa).

Residues 9–16 (SAMNAGKT) and 88–91 (DEAQ) contribute to the ATP site. The Proton acceptor role is filled by glutamate 89.

Belongs to the thymidine kinase family. As to quaternary structure, homotetramer.

It localises to the cytoplasm. It carries out the reaction thymidine + ATP = dTMP + ADP + H(+). This Xanthomonas axonopodis pv. citri (strain 306) protein is Thymidine kinase.